The chain runs to 171 residues: ATP synthase subunit b (171 aa).

A helical membrane pass occupies residues 32-52 (FFAVLLIFLIVLGVIAKWVVP).

This sequence belongs to the ATPase B chain family. In terms of assembly, F-type ATPases have 2 components, F(1) - the catalytic core - and F(0) - the membrane proton channel. F(1) has five subunits: alpha(3), beta(3), gamma(1), delta(1), epsilon(1). F(0) has three main subunits: a(1), b(2) and c(10-14). The alpha and beta chains form an alternating ring which encloses part of the gamma chain. F(1) is attached to F(0) by a central stalk formed by the gamma and epsilon chains, while a peripheral stalk is formed by the delta and b chains.

It localises to the cell membrane. In terms of biological role, f(1)F(0) ATP synthase produces ATP from ADP in the presence of a proton or sodium gradient. F-type ATPases consist of two structural domains, F(1) containing the extramembraneous catalytic core and F(0) containing the membrane proton channel, linked together by a central stalk and a peripheral stalk. During catalysis, ATP synthesis in the catalytic domain of F(1) is coupled via a rotary mechanism of the central stalk subunits to proton translocation. Functionally, component of the F(0) channel, it forms part of the peripheral stalk, linking F(1) to F(0). The chain is ATP synthase subunit b from Mycolicibacterium gilvum (strain PYR-GCK) (Mycobacterium gilvum (strain PYR-GCK)).